A 356-amino-acid chain; its full sequence is Putative ankyrin repeat protein R599 (356 aa).

ANK repeat units follow at residues 111 to 143 (NDDILLCTAIINCSSECLLYLLDKGIPIDFCDN), 152 to 182 (RLEKYIYTTRKNKSSCDMLKIVIDRGGNVNT), 183 to 213 (HNYEPLYSAVNDNNFDKIKLLVENGANKLSD), 215 to 238 (KRKITNTNLEIFQYLIDNRVELEV), 239 to 266 (NFDDIFLQSIINDDSECMKLFIELGANI), and 267 to 298 (NSIPTLELTKIIINARHEILEILINYGLDINN).

The sequence is that of Putative ankyrin repeat protein R599 from Acanthamoeba polyphaga (Amoeba).